A 322-amino-acid polypeptide reads, in one-letter code: Elongation factor P--(R)-beta-lysine ligase (322 aa).

75–77 (SPE) provides a ligand contact to substrate. 99-101 (RNE) contacts ATP. Substrate is bound at residue Tyr117. Residue 241 to 242 (EL) coordinates ATP. Glu248 lines the substrate pocket. Gly297 lines the ATP pocket.

This sequence belongs to the class-II aminoacyl-tRNA synthetase family. EpmA subfamily. In terms of assembly, homodimer.

The enzyme catalyses D-beta-lysine + L-lysyl-[protein] + ATP = N(6)-((3R)-3,6-diaminohexanoyl)-L-lysyl-[protein] + AMP + diphosphate + H(+). With EpmB is involved in the beta-lysylation step of the post-translational modification of translation elongation factor P (EF-P). Catalyzes the ATP-dependent activation of (R)-beta-lysine produced by EpmB, forming a lysyl-adenylate, from which the beta-lysyl moiety is then transferred to the epsilon-amino group of a conserved specific lysine residue in EF-P. The polypeptide is Elongation factor P--(R)-beta-lysine ligase (Avibacterium paragallinarum (Haemophilus gallinarum)).